Reading from the N-terminus, the 130-residue chain is Small ribosomal subunit protein uS9 (130 aa).

This sequence belongs to the universal ribosomal protein uS9 family.

The chain is Small ribosomal subunit protein uS9 from Pseudoalteromonas atlantica (strain T6c / ATCC BAA-1087).